Here is a 540-residue protein sequence, read N- to C-terminus: MAKDPGRVLIFDTTLRDGEQSPGASLNLEEKLAIAQQLARLGVDVIEAGFPFASQGDFSAVQRIAQQVGGDEGPIICGLARASRADIKACADAVAPAPRRRIHTFIATSDIHLEHKLRKSRAEVLAIVPEMVAYARSLVDDVEFSCEDAARSDPEFLYEVIEAAIAAGAGTINIPDTVGFTTPSEFGALIAGIDCHVPNMNEAILSVHGHNDLGLAVANFLEAVKSGARQFECTINGIGERAGNAALEELVMALYVRRRYFNPFFGRESDSPTPLTAVRTEEITKTSRLVSNLTGMVVQPNKAIVGSNAFAHESGIHQDGVLKNRLTYEIVDARTVGLTDNRISLGKLSGRSAVRARLEELGYDLTREDLDEAFARFKDLADRKRDITDRDLEAIVSEQVQQPEARFQLRLVQVSCGSSLRPTATVILAQEDGQEQTAAAVGTGPVDAVCRALNALAGEPNELIEFSVKSVTEGIDAMGEVTIRLRRDGQLFSGHSADTDVVVAAAQAFVNALNRLVAGCGRQSLHPQHDAVLADRRPGI.

In terms of domain architecture, Pyruvate carboxyltransferase spans 8 to 271; the sequence is VLIFDTTLRD…NPFFGRESDS (264 aa). Positions 17, 208, 210, and 244 each coordinate Mn(2+). Residues 408-540 are regulatory domain; the sequence is QLRLVQVSCG…AVLADRRPGI (133 aa).

The protein belongs to the alpha-IPM synthase/homocitrate synthase family. LeuA type 1 subfamily. As to quaternary structure, homodimer. It depends on Mn(2+) as a cofactor.

Its subcellular location is the cytoplasm. It carries out the reaction 3-methyl-2-oxobutanoate + acetyl-CoA + H2O = (2S)-2-isopropylmalate + CoA + H(+). The protein operates within amino-acid biosynthesis; L-leucine biosynthesis; L-leucine from 3-methyl-2-oxobutanoate: step 1/4. In terms of biological role, catalyzes the condensation of the acetyl group of acetyl-CoA with 3-methyl-2-oxobutanoate (2-ketoisovalerate) to form 3-carboxy-3-hydroxy-4-methylpentanoate (2-isopropylmalate). The sequence is that of 2-isopropylmalate synthase from Prochlorococcus marinus (strain MIT 9303).